A 265-amino-acid chain; its full sequence is Mlc titration factor A (265 aa).

Histidine 111, histidine 148, histidine 152, and glutamate 211 together coordinate Zn(2+).

The protein belongs to the MtfA family. Interacts with Mlc. Zn(2+) is required as a cofactor.

It is found in the cytoplasm. Involved in the modulation of the activity of the glucose-phosphotransferase system (glucose-PTS). Interacts with the transcriptional repressor Mlc, preventing its interaction with DNA and leading to the modulation of expression of genes regulated by Mlc, including ptsG, which encodes the PTS system glucose-specific EIICB component. Functionally, shows zinc-dependent metallopeptidase activity. This Pectobacterium atrosepticum (strain SCRI 1043 / ATCC BAA-672) (Erwinia carotovora subsp. atroseptica) protein is Mlc titration factor A.